The chain runs to 520 residues: Cytochrome P450 4F8 (520 aa).

The helical transmembrane segment at 15-37 (AASPWLLLLVVGASWLLARILAW) threads the bilayer. Cys-468 provides a ligand contact to heme.

Belongs to the cytochrome P450 family. Heme is required as a cofactor. Expressed in the epithelium of seminal vesicles, in renal cortex, in adult and fetal liver, in epidermis, in corneal epithelium, in sweat glands, hair follicles, epithelial linings of the ampulla of vas deferens and of the stomach and small intestine, as well as in the transitional epithelium of the bladder and ureter (at protein level). In the epidermis, expressed from the basal cell to the granular cell layers. In the corneal epithelium, expressed in all cell layers. Also detected in prostate. Up-regulated in the epidermis of psoriatic lesions.

The protein resides in the endoplasmic reticulum membrane. It localises to the microsome membrane. It carries out the reaction an organic molecule + reduced [NADPH--hemoprotein reductase] + O2 = an alcohol + oxidized [NADPH--hemoprotein reductase] + H2O + H(+). The catalysed reaction is (5Z,8Z,11Z,14Z)-eicosatetraenoate + reduced [NADPH--hemoprotein reductase] + O2 = (18R)-hydroxy-(5Z,8Z,11Z,14Z)-eicosatetraenoate + oxidized [NADPH--hemoprotein reductase] + H2O + H(+). It catalyses the reaction (4Z,7Z,10Z,13Z,16Z)-docosapentaenoate + reduced [NADPH--hemoprotein reductase] + O2 = 20-hydroxy-(4Z,7Z,10Z,13Z,16Z)-docosapentaenoate + oxidized [NADPH--hemoprotein reductase] + H2O + H(+). The enzyme catalyses prostaglandin H1 + reduced [NADPH--hemoprotein reductase] + O2 = 19-hydroxyprostaglandin H1 + oxidized [NADPH--hemoprotein reductase] + H2O + H(+). It carries out the reaction prostaglandin H2 + reduced [NADPH--hemoprotein reductase] + O2 = 19-hydroxyprostaglandin H2 + oxidized [NADPH--hemoprotein reductase] + H2O + H(+). The catalysed reaction is prostaglandin I2 + reduced [NADPH--hemoprotein reductase] + O2 = 19-hydroxy-prostaglandin I2 + oxidized [NADPH--hemoprotein reductase] + H2O + H(+). It catalyses the reaction (4Z,7Z,10Z,13Z,16Z,19Z)-docosahexaenoate + reduced [NADPH--hemoprotein reductase] + O2 = 10,11-epoxy-(4Z,7Z,13Z,16Z,19Z)-docosapentaenoate + oxidized [NADPH--hemoprotein reductase] + H2O + H(+). The enzyme catalyses (4Z,7Z,10Z,13Z,16Z,19Z)-docosahexaenoate + reduced [NADPH--hemoprotein reductase] + O2 = 13,14-epoxy-(4Z,7Z,10Z,16Z,19Z)-docosapentaenoate + oxidized [NADPH--hemoprotein reductase] + H2O + H(+). It carries out the reaction (4Z,7Z,10Z,13Z,16Z,19Z)-docosahexaenoate + reduced [NADPH--hemoprotein reductase] + O2 = 16,17-epoxy-(4Z,7Z,10Z,13Z,19Z)-docosapentaenoate + oxidized [NADPH--hemoprotein reductase] + H2O + H(+). The catalysed reaction is (4Z,7Z,10Z,13Z,16Z,19Z)-docosahexaenoate + reduced [NADPH--hemoprotein reductase] + O2 = 19,20-epoxy-(4Z,7Z,10Z,13Z,16Z)-docosapentaenoate + oxidized [NADPH--hemoprotein reductase] + H2O + H(+). It catalyses the reaction (7Z,10Z,13Z,16Z,19Z)-docosapentaenoate + reduced [NADPH--hemoprotein reductase] + O2 = 10,11-epoxy-(7Z,13Z,16Z,19Z)-docosatetraenoate + oxidized [NADPH--hemoprotein reductase] + H2O + H(+). The enzyme catalyses (7Z,10Z,13Z,16Z,19Z)-docosapentaenoate + reduced [NADPH--hemoprotein reductase] + O2 = 13,14-epoxy-(7Z,10Z,16Z,19Z)-docosatetraenoate + oxidized [NADPH--hemoprotein reductase] + H2O + H(+). It carries out the reaction (7Z,10Z,13Z,16Z,19Z)-docosapentaenoate + reduced [NADPH--hemoprotein reductase] + O2 = 16,17-epoxy-(7Z,10Z,13Z,19Z)-docosatetraenoate + oxidized [NADPH--hemoprotein reductase] + H2O + H(+). The catalysed reaction is (7Z,10Z,13Z,16Z,19Z)-docosapentaenoate + reduced [NADPH--hemoprotein reductase] + O2 = 19,20-epoxy-(7Z,10Z,13Z,16Z)-docosatetraenoate + oxidized [NADPH--hemoprotein reductase] + H2O + H(+). The protein operates within lipid metabolism; fatty acid metabolism. Its function is as follows. A cytochrome P450 monooxygenase involved in the metabolism of endogenous polyunsaturated fatty acids (PUFAs) and their oxygenated derivatives (oxylipins). Mechanistically, uses molecular oxygen inserting one oxygen atom into a substrate, and reducing the second into a water molecule, with two electrons provided by NADPH via cytochrome P450 reductase (CPR; NADPH-ferrihemoprotein reductase). Catalyzes the hydroxylation of carbon hydrogen bonds, with preference for omega-1 and omega-2 positions. Hydroxylates (5Z,8Z,11Z,14Z)-eicosatetraenoic acid (arachidonate) predominantly at omega-2 position to form (18R)-hydroxyeicosatetraenoic acid (18R-HETE). Exhibits omega-1 hydroxylase activity toward prostaglandin (PG) H1, PGH2 and PGI2. Catalyzes the epoxidation of double bonds of PUFAs, including docosahexaenoic and docosapentaenoic acids. Shows little activity against PGD2, PGE1, PGE2, PGF2alpha, and leukotriene B4. The protein is Cytochrome P450 4F8 of Homo sapiens (Human).